The sequence spans 775 residues: ATP-dependent 6-phosphofructokinase 2 (775 aa).

The tract at residues 1-390 (MTNTILDTYS…YHSAYRHLNT (390 aa)) is N-terminal catalytic PFK domain 1. ATP is bound by residues Gly-25, 88-89 (RC), and 118-121 (GDGS). Asp-119 contributes to the Mg(2+) binding site. Substrate is bound by residues 164–166 (SID), Arg-201, 208–210 (MGR), Glu-264, Arg-292, and 298–301 (HIQR). Asp-166 (proton acceptor) is an active-site residue. Residues 391 to 404 (SDHPKMVLPEDKRM) are interdomain linker. The interval 405-775 (RVAIIHVGAP…GRSSLYAIPN (371 aa)) is C-terminal regulatory PFK domain 2. Beta-D-fructose 2,6-bisphosphate contacts are provided by residues 537–541 (SMSNN), 582–584 (QGA), Asp-640, and 672–675 (HFQQ).

Belongs to the phosphofructokinase type A (PFKA) family. ATP-dependent PFK group I subfamily. Eukaryotic two domain clade 'E' sub-subfamily. As to quaternary structure, homotetramer. Mg(2+) serves as cofactor.

The protein localises to the cytoplasm. It catalyses the reaction beta-D-fructose 6-phosphate + ATP = beta-D-fructose 1,6-bisphosphate + ADP + H(+). It participates in carbohydrate degradation; glycolysis; D-glyceraldehyde 3-phosphate and glycerone phosphate from D-glucose: step 3/4. With respect to regulation, allosterically activated by ADP, AMP, or fructose 2,6-bisphosphate, and allosterically inhibited by ATP or citrate. In terms of biological role, catalyzes the phosphorylation of D-fructose 6-phosphate to fructose 1,6-bisphosphate by ATP, the first committing step of glycolysis. The polypeptide is ATP-dependent 6-phosphofructokinase 2 (pfkB) (Aspergillus oryzae (strain ATCC 42149 / RIB 40) (Yellow koji mold)).